A 311-amino-acid chain; its full sequence is tRNA-cytidine(32) 2-sulfurtransferase (311 aa).

A PP-loop motif motif is present at residues 47-52 (SGGKDS). Positions 122, 125, and 213 each coordinate [4Fe-4S] cluster.

It belongs to the TtcA family. Homodimer. It depends on Mg(2+) as a cofactor. [4Fe-4S] cluster is required as a cofactor.

It localises to the cytoplasm. The enzyme catalyses cytidine(32) in tRNA + S-sulfanyl-L-cysteinyl-[cysteine desulfurase] + AH2 + ATP = 2-thiocytidine(32) in tRNA + L-cysteinyl-[cysteine desulfurase] + A + AMP + diphosphate + H(+). It functions in the pathway tRNA modification. In terms of biological role, catalyzes the ATP-dependent 2-thiolation of cytidine in position 32 of tRNA, to form 2-thiocytidine (s(2)C32). The sulfur atoms are provided by the cysteine/cysteine desulfurase (IscS) system. The chain is tRNA-cytidine(32) 2-sulfurtransferase from Salmonella typhi.